Reading from the N-terminus, the 360-residue chain is Transcription elongation factor, mitochondrial (360 aa).

A mitochondrion-targeting transit peptide spans 1–35 (MSGSVLFTAGERWRCFLTPSRSSLYWALHNFCCRK).

This sequence belongs to the TEFM family. Interacts with POLRMT.

It localises to the mitochondrion matrix. It is found in the mitochondrion nucleoid. In terms of biological role, transcription elongation factor which increases mitochondrial RNA polymerase processivity. Regulates transcription of the mitochondrial genome, including genes important for the oxidative phosphorylation machinery. This Homo sapiens (Human) protein is Transcription elongation factor, mitochondrial (TEFM).